The chain runs to 215 residues: MMQEIKAFNEKRAEIYWWLSSLFAKELTQEELDKYQSMEIRAFLTGLAENDALRPSVNAFVDALNRLVDRQDAQLELAADFCDLFLKTAKHGALPYASIYLTKDGLLNGEPAQKMDAWLKKHGVQVNQQLNEPADHLAIMLDFLGNLIIRSNELEQDRHMEEAFIEQNAFIQEMLLSWLPSFSQRAAEYDEFGFYNSAIKLLVAFCMLDSDYLVG.

The protein belongs to the TorD/DmsD family. TorD subfamily.

The protein localises to the cytoplasm. Its function is as follows. Involved in the biogenesis of TorA. Acts on TorA before the insertion of the molybdenum cofactor and, as a result, probably favors a conformation of the apoenzyme that is competent for acquiring the cofactor. The sequence is that of Chaperone protein TorD from Vibrio vulnificus (strain YJ016).